The sequence spans 311 residues: Probable manganese-dependent inorganic pyrophosphatase (311 aa).

His9, Asp13, Asp15, Asp75, His97, and Asp149 together coordinate Mn(2+).

This sequence belongs to the PPase class C family. It depends on Mn(2+) as a cofactor.

Its subcellular location is the cytoplasm. The catalysed reaction is diphosphate + H2O = 2 phosphate + H(+). The polypeptide is Probable manganese-dependent inorganic pyrophosphatase (Lactobacillus johnsonii (strain CNCM I-12250 / La1 / NCC 533)).